The sequence spans 134 residues: D-ribose pyranase (134 aa).

The active-site Proton donor is the histidine 20. Substrate is bound by residues aspartate 28, histidine 99, and 123-125 (YSN).

This sequence belongs to the RbsD / FucU family. RbsD subfamily. Homodecamer.

The protein resides in the cytoplasm. It carries out the reaction beta-D-ribopyranose = beta-D-ribofuranose. It functions in the pathway carbohydrate metabolism; D-ribose degradation; D-ribose 5-phosphate from beta-D-ribopyranose: step 1/2. Its function is as follows. Catalyzes the interconversion of beta-pyran and beta-furan forms of D-ribose. The polypeptide is D-ribose pyranase (Staphylococcus aureus (strain USA300)).